The primary structure comprises 152 residues: Nucleoside diphosphate kinase B (152 aa).

Positions Met1–Lys66 are interaction with AKAP13. ATP-binding residues include Lys12, Phe60, Arg88, Thr94, Arg105, and Asn115. His118 functions as the Pros-phosphohistidine intermediate in the catalytic mechanism.

Belongs to the NDK family. In terms of assembly, hexamer of two different chains: An and B (A6, A5B, A4B2, A3B3, A2B4, AB5, B6). Interacts with CAPN8. Interacts with AKAP13. Interacts with ITGB1BP1 (via C-terminal domain region). Interacts with BCL2L10. The cofactor is Mg(2+).

Its subcellular location is the cytoplasm. The protein localises to the cell projection. It localises to the lamellipodium. The protein resides in the ruffle. It is found in the nucleus. It catalyses the reaction a 2'-deoxyribonucleoside 5'-diphosphate + ATP = a 2'-deoxyribonucleoside 5'-triphosphate + ADP. It carries out the reaction a ribonucleoside 5'-diphosphate + ATP = a ribonucleoside 5'-triphosphate + ADP. The enzyme catalyses ATP + protein L-histidine = ADP + protein N-phospho-L-histidine.. In terms of biological role, major role in the synthesis of nucleoside triphosphates other than ATP. The ATP gamma phosphate is transferred to the NDP beta phosphate via a ping-pong mechanism, using a phosphorylated active-site intermediate. Negatively regulates Rho activity by interacting with AKAP13/LBC. Acts as a transcriptional activator of the MYC gene; binds DNA non-specifically. Binds to both single-stranded guanine- and cytosine-rich strands within the nuclease hypersensitive element (NHE) III(1) region of the MYC gene promoter. Does not bind to duplex NHE III(1). Has G-quadruplex (G4) DNA-binding activity, which is independent of its nucleotide-binding and kinase activity. Binds both folded and unfolded G4 with similar low nanomolar affinities. Stabilizes folded G4s regardless of whether they are prefolded or not. Exhibits histidine protein kinase activity. The chain is Nucleoside diphosphate kinase B (NME2) from Bos taurus (Bovine).